A 395-amino-acid chain; its full sequence is 8-amino-7-oxononanoate synthase (395 aa).

Position 108 to 109 (108 to 109 (GF)) interacts with pyridoxal 5'-phosphate. His134 is a binding site for substrate. Pyridoxal 5'-phosphate contacts are provided by residues Ser184, 209 to 212 (DDAH), and 240 to 243 (TLSK). At Lys243 the chain carries N6-(pyridoxal phosphate)lysine. Thr357 serves as a coordination point for substrate.

This sequence belongs to the class-II pyridoxal-phosphate-dependent aminotransferase family. BioF subfamily. As to quaternary structure, homodimer. Pyridoxal 5'-phosphate is required as a cofactor.

The catalysed reaction is 6-carboxyhexanoyl-[ACP] + L-alanine + H(+) = (8S)-8-amino-7-oxononanoate + holo-[ACP] + CO2. It participates in cofactor biosynthesis; biotin biosynthesis. Its function is as follows. Catalyzes the decarboxylative condensation of pimeloyl-[acyl-carrier protein] and L-alanine to produce 8-amino-7-oxononanoate (AON), [acyl-carrier protein], and carbon dioxide. The protein is 8-amino-7-oxononanoate synthase of Fervidobacterium nodosum (strain ATCC 35602 / DSM 5306 / Rt17-B1).